We begin with the raw amino-acid sequence, 288 residues long: Transmembrane protein 163 (288 aa).

Positions 1-11 (MERAPGSERRS) are enriched in basic and acidic residues. The interval 1-64 (MERAPGSERR…ESGQFSDGFE (64 aa)) is disordered. The Cytoplasmic segment spans residues 1–87 (MERAPGSERR…HEAQNYRKKA (87 aa)). Position 11 is a phosphoserine (Ser-11). A compositionally biased stretch (pro residues) spans 12–24 (PPGPGVPRPPPRG). The span at 25–42 (HAPSTAAPAPNPAPLSSS) shows a compositional bias: low complexity. Residues 41-71 (SSMQPDEERQPRISESGQFSDGFEDRGLLES) form a required for interaction with MCOLN1 region. 3 positions are modified to phosphoserine: Ser-54, Ser-56, and Ser-60. Residues 88 to 108 (LWVSWLSIIVTLALAVAAFTV) traverse the membrane as a helical segment. The Extracellular portion of the chain corresponds to 109–115 (SVMRYSA). Residues 116-136 (SAFGFAFDAILDVLSSAIVLW) traverse the membrane as a helical segment. Over 137-149 (RYSNAAAVHSAHR) the chain is Cytoplasmic. Residues 150 to 170 (EYIACVILGVIFLLSSICIVV) form a helical membrane-spanning segment. Residues 171 to 186 (KAIHDLSTRLLPEVDD) are Extracellular-facing. Residues 187-207 (FLFSVSILSGILCSVLAVLKF) form a helical membrane-spanning segment. At 208-216 (MLGKVLTSR) the chain is on the cytoplasmic side. A helical membrane pass occupies residues 217 to 237 (ALITDGFNSLVGGVMGFSILL). Residues 238 to 254 (SAEVFKHNAAVWYLDGS) lie on the Extracellular side of the membrane. The helical transmembrane segment at 255 to 275 (IGVLIGLTIFAYGVKLLIDMV) threads the bilayer. Over 276 to 288 (PRVRQTRHYEMFE) the chain is Cytoplasmic.

The protein belongs to the TMEM163 family. In terms of assembly, homodimer. Interacts with MCOLN1. Interacts with SLC30A1, SLC30A2, SLC30A3 and SLC30A4. As to expression, strongly expressed in brain. Also detected in lung, liver, kidney and spleen. Mainly expressed in the glutaminergic neuron subpopulations.

It is found in the cytoplasmic vesicle. The protein localises to the secretory vesicle. It localises to the synaptic vesicle membrane. Its subcellular location is the early endosome membrane. The protein resides in the late endosome membrane. It is found in the lysosome membrane. The protein localises to the cell membrane. The catalysed reaction is Zn(2+)(in) = Zn(2+)(out). Functionally, zinc ion transporter that mediates zinc efflux and plays a crucial role in intracellular zinc homeostasis. Binds the divalent cations Zn(2+), Ni(2+), and to a minor extent Cu(2+). Is a functional modulator of P2X purinoceptors, including P2RX1, P2RX3, P2RX4 and P2RX7. Plays a role in central nervous system development and is required for myelination, and survival and proliferation of oligodendrocytes. The protein is Transmembrane protein 163 (Tmem163) of Rattus norvegicus (Rat).